The primary structure comprises 712 residues: Polyphosphate kinase (712 aa).

N49 is an ATP binding site. Residues R398 and R428 each coordinate Mg(2+). H458 acts as the Phosphohistidine intermediate in catalysis. Residues Y491, R587, and H615 each contribute to the ATP site.

Belongs to the polyphosphate kinase 1 (PPK1) family. Mg(2+) serves as cofactor. In terms of processing, an intermediate of this reaction is the autophosphorylated ppk in which a phosphate is covalently linked to a histidine residue through a N-P bond.

It catalyses the reaction [phosphate](n) + ATP = [phosphate](n+1) + ADP. Catalyzes the reversible transfer of the terminal phosphate of ATP to form a long-chain polyphosphate (polyP). The protein is Polyphosphate kinase of Parasynechococcus marenigrum (strain WH8102).